Consider the following 502-residue polypeptide: Reduced meiotic recombination protein C1442.04c (502 aa).

Ser328, Ser330, and Ser331 each carry phosphoserine. Disordered stretches follow at residues 353 to 391, 420 to 440, and 454 to 502; these read NDLNNEEPNSVVAEDGSEIITLDENDQSPNEATEKLRDN, GSLNNADLSQEPITNDGENVD, and ESAF…PSDD. The segment covering 367 to 378 has biased composition (acidic residues); it reads DGSEIITLDEND. 2 stretches are compositionally biased toward polar residues: residues 420–436 and 462–477; these read GSLNNADLSQEPITNDG and GTINSSKRRLSVTTDT.

Belongs to the RMR1 family.

It localises to the cytoplasm. The protein localises to the nucleus. In terms of biological role, required for normal levels of gene conversion events during meiosis. The protein is Reduced meiotic recombination protein C1442.04c of Schizosaccharomyces pombe (strain 972 / ATCC 24843) (Fission yeast).